The primary structure comprises 239 residues: Fatty acid metabolism regulator protein (239 aa).

Residues 6–74 enclose the HTH gntR-type domain; that stretch reads QSPAGFAEEY…HGKPTKINNF (69 aa). Residues 34–53 constitute a DNA-binding region (H-T-H motif); it reads ERELSELIGVTRTTLREVLQ.

Homodimer.

It is found in the cytoplasm. Its function is as follows. Multifunctional regulator of fatty acid metabolism. The polypeptide is Fatty acid metabolism regulator protein (Pectobacterium atrosepticum (strain SCRI 1043 / ATCC BAA-672) (Erwinia carotovora subsp. atroseptica)).